Consider the following 38-residue polypeptide: Cytochrome b559 subunit beta (38 aa).

The helical transmembrane segment at 13-29 threads the bilayer; that stretch reads WLAVHALAVPTVFFLGS. H17 serves as a coordination point for heme.

Belongs to the PsbE/PsbF family. Heterodimer of an alpha subunit and a beta subunit. PSII is composed of 1 copy each of membrane proteins PsbA, PsbB, PsbC, PsbD, PsbE, PsbF, PsbH, PsbI, PsbJ, PsbK, PsbL, PsbM, PsbT, PsbX, PsbY, PsbZ, Psb30/Ycf12, at least 3 peripheral proteins of the oxygen-evolving complex and a large number of cofactors. It forms dimeric complexes. Heme b is required as a cofactor.

Its subcellular location is the plastid. The protein resides in the chloroplast thylakoid membrane. Its function is as follows. This b-type cytochrome is tightly associated with the reaction center of photosystem II (PSII). PSII is a light-driven water:plastoquinone oxidoreductase that uses light energy to abstract electrons from H(2)O, generating O(2) and a proton gradient subsequently used for ATP formation. It consists of a core antenna complex that captures photons, and an electron transfer chain that converts photonic excitation into a charge separation. The sequence is that of Cytochrome b559 subunit beta from Ostreococcus tauri.